Consider the following 356-residue polypeptide: Probable neutral protease 2 homolog TRV_06370 (356 aa).

The first 17 residues, 1-17, serve as a signal peptide directing secretion; sequence MQFTALLAALGAPLALA. Residues 18–183 constitute a propeptide that is removed on maturation; it reads ASIPAAAHNH…DDSTGVIDKR (166 aa). Cystine bridges form between C191-C262 and C269-C287. A Zn(2+)-binding site is contributed by H311. The active site involves E312. Positions 315 and 326 each coordinate Zn(2+).

Belongs to the peptidase M35 family. Zn(2+) serves as cofactor.

The protein resides in the secreted. The enzyme catalyses Preferential cleavage of bonds with hydrophobic residues in P1'. Also 3-Asn-|-Gln-4 and 8-Gly-|-Ser-9 bonds in insulin B chain.. In terms of biological role, probable secreted metalloprotease that shows high activities on basic nuclear substrates such as histone and protamine. May be involved in virulence. The chain is Probable neutral protease 2 homolog TRV_06370 from Trichophyton verrucosum (strain HKI 0517).